We begin with the raw amino-acid sequence, 429 residues long: Trigger factor (429 aa).

A PPIase FKBP-type domain is found at G164–P249.

Belongs to the FKBP-type PPIase family. Tig subfamily.

It localises to the cytoplasm. It catalyses the reaction [protein]-peptidylproline (omega=180) = [protein]-peptidylproline (omega=0). Functionally, involved in protein export. Acts as a chaperone by maintaining the newly synthesized protein in an open conformation. Functions as a peptidyl-prolyl cis-trans isomerase. This Lysinibacillus sphaericus (strain C3-41) protein is Trigger factor.